A 447-amino-acid chain; its full sequence is Asparagine--tRNA ligase (447 aa).

The protein belongs to the class-II aminoacyl-tRNA synthetase family. Homodimer.

It localises to the cytoplasm. It catalyses the reaction tRNA(Asn) + L-asparagine + ATP = L-asparaginyl-tRNA(Asn) + AMP + diphosphate + H(+). This chain is Asparagine--tRNA ligase, found in Lactococcus lactis subsp. lactis (strain IL1403) (Streptococcus lactis).